Here is a 446-residue protein sequence, read N- to C-terminus: Protein adenylyltransferase FICD (446 aa).

Topologically, residues 1–18 (MAVTECEWASLGSRIGLR) are cytoplasmic. A helical; Signal-anchor for type II membrane protein transmembrane segment spans residues 19–39 (AALVLLSGSLLVVLFPLSGLE). At 40–446 (HQYRTALNIL…ECKQTITIKT (407 aa)) the chain is on the lumenal side. TPR repeat units follow at residues 94–127 (AKAALNQALEMKRQGKKEKAHKLLHHALKMDPDH) and 128–161 (VDALNELGILLEEEKDIIQADYLYSKALTISPHN). An Inhibitory (S/T)XXXE(G/N) motif motif is present at residues 218–223 (TVAIEG). E222 is a binding site for ATP. N263 carries an N-linked (GlcNAc...) asparagine glycan. Residues 273–408 (VTIDNILEIH…VRPFIRFIAK (136 aa)) enclose the Fido domain. An ATP-binding site is contributed by 304-307 (VGHH). H351 is an active-site residue. ATP-binding positions include 355 to 362 (DGNGRTSR), 387 to 388 (YY), and N395.

Belongs to the fic family. In terms of assembly, homodimer. The cofactor is Mg(2+). Mn(2+) is required as a cofactor.

It is found in the endoplasmic reticulum membrane. The catalysed reaction is L-tyrosyl-[protein] + ATP = O-(5'-adenylyl)-L-tyrosyl-[protein] + diphosphate. It carries out the reaction 3-O-(5'-adenylyl)-L-threonyl-[protein] + H2O = L-threonyl-[protein] + AMP + H(+). It catalyses the reaction L-threonyl-[protein] + ATP = 3-O-(5'-adenylyl)-L-threonyl-[protein] + diphosphate. With respect to regulation, the side chain of Glu-222 determines which of the two opposing activities (AMPylase or de-AMPylase) will take place. In response to endoplasmic reticulum stress, mediates de-AMPylase activity. Adenylyltransferase activity is inhibited by the inhibitory helix present at the N-terminus: Glu-222 binds ATP and competes with ATP-binding at Arg-362, thereby preventing adenylyltransferase activity. In unstressed cells, disengagement of Glu-222 promotes adenylyltransferase activity. Activation dissociates ATP-binding from Glu-222, allowing ordered binding of the entire ATP moiety with the alpha-phosphate in an orientation that is productive for accepting an incoming target hydroxyl side chain. Its function is as follows. Protein that can both mediate the addition of adenosine 5'-monophosphate (AMP) to specific residues of target proteins (AMPylation), and the removal of the same modification from target proteins (de-AMPylation), depending on the context. The side chain of Glu-222 determines which of the two opposing activities (AMPylase or de-AMPylase) will take place. Acts as a key regulator of the ERN1/IRE1-mediated unfolded protein response (UPR) by mediating AMPylation or de-AMPylation of HSPA5/BiP. In unstressed cells, acts as an adenylyltransferase by mediating AMPylation of HSPA5/BiP at 'Thr-518', thereby inactivating it. In response to endoplasmic reticulum stress, acts as a phosphodiesterase by mediating removal of ATP (de-AMPylation) from HSPA5/BiP at 'Thr-518', leading to restore HSPA5/BiP activity. This is Protein adenylyltransferase FICD from Xenopus tropicalis (Western clawed frog).